Consider the following 23-residue polypeptide: Coenzyme PQQ synthesis protein A (23 aa).

Residues 15–19 (EVTLY) constitute a cross-link (pyrroloquinoline quinone (Glu-Tyr)).

It belongs to the PqqA family.

The protein operates within cofactor biosynthesis; pyrroloquinoline quinone biosynthesis. In terms of biological role, required for coenzyme pyrroloquinoline quinone (PQQ) biosynthesis. PQQ is probably formed by cross-linking a specific glutamate to a specific tyrosine residue and excising these residues from the peptide. The protein is Coenzyme PQQ synthesis protein A of Pseudomonas aeruginosa (strain UCBPP-PA14).